Here is a 458-residue protein sequence, read N- to C-terminus: Argininosuccinate lyase (458 aa).

It belongs to the lyase 1 family. Argininosuccinate lyase subfamily.

The protein resides in the cytoplasm. It catalyses the reaction 2-(N(omega)-L-arginino)succinate = fumarate + L-arginine. It participates in amino-acid biosynthesis; L-arginine biosynthesis; L-arginine from L-ornithine and carbamoyl phosphate: step 3/3. The protein is Argininosuccinate lyase of Salmonella agona (strain SL483).